The following is a 430-amino-acid chain: Tol-Pal system protein TolB (430 aa).

Positions 1-21 (MKQALRVAFGFLILWASVLHA) are cleaved as a signal peptide.

It belongs to the TolB family. As to quaternary structure, the Tol-Pal system is composed of five core proteins: the inner membrane proteins TolA, TolQ and TolR, the periplasmic protein TolB and the outer membrane protein Pal. They form a network linking the inner and outer membranes and the peptidoglycan layer.

Its subcellular location is the periplasm. In terms of biological role, part of the Tol-Pal system, which plays a role in outer membrane invagination during cell division and is important for maintaining outer membrane integrity. TolB occupies a key intermediary position in the Tol-Pal system because it communicates directly with both membrane-embedded components, Pal in the outer membrane and TolA in the inner membrane. The chain is Tol-Pal system protein TolB from Shigella flexneri serotype 5b (strain 8401).